The chain runs to 108 residues: Ribonuclease P protein component 4 (108 aa).

Residues Cys60, Cys63, Cys86, and Cys89 each coordinate Zn(2+).

Belongs to the eukaryotic/archaeal RNase P protein component 4 family. Consists of a catalytic RNA component and at least 4-5 protein subunits. It depends on Zn(2+) as a cofactor.

It localises to the cytoplasm. It catalyses the reaction Endonucleolytic cleavage of RNA, removing 5'-extranucleotides from tRNA precursor.. Its function is as follows. Part of ribonuclease P, a protein complex that generates mature tRNA molecules by cleaving their 5'-ends. The chain is Ribonuclease P protein component 4 from Sulfurisphaera tokodaii (strain DSM 16993 / JCM 10545 / NBRC 100140 / 7) (Sulfolobus tokodaii).